A 162-amino-acid polypeptide reads, in one-letter code: UPF0262 protein HNE_1347 (162 aa).

This sequence belongs to the UPF0262 family.

The polypeptide is UPF0262 protein HNE_1347 (Hyphomonas neptunium (strain ATCC 15444)).